The primary structure comprises 331 residues: Ferredoxin--NADP reductase 2 (331 aa).

FAD contacts are provided by Glu-37, Gln-45, Tyr-50, Val-90, Phe-124, Asp-285, and Thr-326.

This sequence belongs to the ferredoxin--NADP reductase type 2 family. In terms of assembly, homodimer. FAD serves as cofactor.

It carries out the reaction 2 reduced [2Fe-2S]-[ferredoxin] + NADP(+) + H(+) = 2 oxidized [2Fe-2S]-[ferredoxin] + NADPH. This is Ferredoxin--NADP reductase 2 from Bacillus velezensis (strain DSM 23117 / BGSC 10A6 / LMG 26770 / FZB42) (Bacillus amyloliquefaciens subsp. plantarum).